Reading from the N-terminus, the 160-residue chain is Transcription elongation factor GreA (160 aa).

Residues 49 to 75 are a coiled coil; it reads SEYDEAKNDQAFTEGKILQLENKLKNA.

It belongs to the GreA/GreB family.

Its function is as follows. Necessary for efficient RNA polymerase transcription elongation past template-encoded arresting sites. The arresting sites in DNA have the property of trapping a certain fraction of elongating RNA polymerases that pass through, resulting in locked ternary complexes. Cleavage of the nascent transcript by cleavage factors such as GreA or GreB allows the resumption of elongation from the new 3'terminus. GreA releases sequences of 2 to 3 nucleotides. The sequence is that of Transcription elongation factor GreA from Clostridium botulinum (strain Alaska E43 / Type E3).